Consider the following 529-residue polypeptide: Bifunctional purine biosynthesis protein PurH (529 aa).

One can recognise an MGS-like domain in the interval 1–148 (MQQRRPIRRA…KNHKDVAIVV (148 aa)).

This sequence belongs to the PurH family.

It carries out the reaction (6R)-10-formyltetrahydrofolate + 5-amino-1-(5-phospho-beta-D-ribosyl)imidazole-4-carboxamide = 5-formamido-1-(5-phospho-D-ribosyl)imidazole-4-carboxamide + (6S)-5,6,7,8-tetrahydrofolate. The catalysed reaction is IMP + H2O = 5-formamido-1-(5-phospho-D-ribosyl)imidazole-4-carboxamide. Its pathway is purine metabolism; IMP biosynthesis via de novo pathway; 5-formamido-1-(5-phospho-D-ribosyl)imidazole-4-carboxamide from 5-amino-1-(5-phospho-D-ribosyl)imidazole-4-carboxamide (10-formyl THF route): step 1/1. It participates in purine metabolism; IMP biosynthesis via de novo pathway; IMP from 5-formamido-1-(5-phospho-D-ribosyl)imidazole-4-carboxamide: step 1/1. The chain is Bifunctional purine biosynthesis protein PurH from Pectobacterium atrosepticum (strain SCRI 1043 / ATCC BAA-672) (Erwinia carotovora subsp. atroseptica).